An 857-amino-acid chain; its full sequence is Autoinducer 2 sensor kinase/phosphatase LuxQ (857 aa).

Transmembrane regions (helical) follow at residues I20–S40 and L283–I303. A Histidine kinase domain is found at K490–K712. H493 carries the phosphohistidine; by autocatalysis modification. The Response regulatory domain occupies K735–K850. D784 is subject to 4-aspartylphosphate.

As to quaternary structure, binds the complex formed by the autoinducer and LuxP.

The protein localises to the cell inner membrane. It catalyses the reaction ATP + protein L-histidine = ADP + protein N-phospho-L-histidine.. In terms of biological role, at low cell density, in absence of autoinducer has a kinase activity, and autophosphorylates on a histidine residue. The phosphoryl group is then transferred to an aspartate residue in the response regulator domain. The phosphoryl group is transferred to LuxU, and ultimately to LuxO. At high cell density, in the presence of autoinducer, the kinase activity is inactivated, and the response regulator domain has a phosphatase activity. This is Autoinducer 2 sensor kinase/phosphatase LuxQ (luxQ) from Vibrio vulnificus (strain YJ016).